Consider the following 316-residue polypeptide: Pantothenate kinase (316 aa).

95-102 (GSVAVGKS) contacts ATP.

The protein belongs to the prokaryotic pantothenate kinase family.

The protein localises to the cytoplasm. The enzyme catalyses (R)-pantothenate + ATP = (R)-4'-phosphopantothenate + ADP + H(+). The protein operates within cofactor biosynthesis; coenzyme A biosynthesis; CoA from (R)-pantothenate: step 1/5. This is Pantothenate kinase from Shewanella oneidensis (strain ATCC 700550 / JCM 31522 / CIP 106686 / LMG 19005 / NCIMB 14063 / MR-1).